The chain runs to 421 residues: UDP-N-acetylglucosamine 1-carboxyvinyltransferase (421 aa).

A phosphoenolpyruvate-binding site is contributed by 23–24 (KN). Arg-92 contributes to the UDP-N-acetyl-alpha-D-glucosamine binding site. The Proton donor role is filled by Cys-116. Residue Cys-116 is modified to 2-(S-cysteinyl)pyruvic acid O-phosphothioketal. Residues 121–125 (RPVDL), 161–164 (KVSV), Asp-306, and Ile-328 each bind UDP-N-acetyl-alpha-D-glucosamine.

The protein belongs to the EPSP synthase family. MurA subfamily.

The protein resides in the cytoplasm. The catalysed reaction is phosphoenolpyruvate + UDP-N-acetyl-alpha-D-glucosamine = UDP-N-acetyl-3-O-(1-carboxyvinyl)-alpha-D-glucosamine + phosphate. It functions in the pathway cell wall biogenesis; peptidoglycan biosynthesis. Cell wall formation. Adds enolpyruvyl to UDP-N-acetylglucosamine. The chain is UDP-N-acetylglucosamine 1-carboxyvinyltransferase from Vibrio campbellii (strain ATCC BAA-1116).